The sequence spans 303 residues: 34 kDa antigenic protein homolog (303 aa).

The next 4 membrane-spanning stretches (helical) occupy residues 42–62 (IAVA…MFTL), 77–97 (TGLP…ALVP), 102–122 (HVTV…SATF), and 134–154 (LWVV…ALLV). Low complexity-rich tracts occupy residues 194 to 207 (QGAQ…SPGP) and 215 to 255 (GYGS…HQGP). The interval 194-303 (QGAQQAAGLQ…QSSSPGGAPV (110 aa)) is disordered. Residues 256–271 (STPPTGFPSFSPPPPV) are compositionally biased toward pro residues. Positions 274–286 (GTGSQAGSAPVNY) are enriched in polar residues. The span at 287–303 (SNPSGGEQSSSPGGAPV) shows a compositional bias: low complexity.

To M.paratuberculosis 34 kDa antigenic protein.

The protein localises to the cell membrane. The polypeptide is 34 kDa antigenic protein homolog (Mycobacterium bovis (strain ATCC BAA-935 / AF2122/97)).